Here is a 335-residue protein sequence, read N- to C-terminus: Methionine import ATP-binding protein MetN (335 aa).

An ABC transporter domain is found at 2–241; that stretch reads IQFQRLHKSY…PKHATTRRFV (240 aa). 38–45 is an ATP binding site; it reads GHSGAGKS.

Belongs to the ABC transporter superfamily. Methionine importer (TC 3.A.1.24) family. As to quaternary structure, the complex is composed of two ATP-binding proteins (MetN), two transmembrane proteins (MetI) and a solute-binding protein (MetQ).

It is found in the cell inner membrane. The enzyme catalyses L-methionine(out) + ATP + H2O = L-methionine(in) + ADP + phosphate + H(+). It catalyses the reaction D-methionine(out) + ATP + H2O = D-methionine(in) + ADP + phosphate + H(+). In terms of biological role, part of the ABC transporter complex MetNIQ involved in methionine import. Responsible for energy coupling to the transport system. This is Methionine import ATP-binding protein MetN from Xanthomonas axonopodis pv. citri (strain 306).